Reading from the N-terminus, the 726-residue chain is Long-chain-alcohol oxidase FAO4A (726 aa).

Residues 103–119 (ILLNWSSSYFSLLRMLF) traverse the membrane as a helical segment. Position 224–239 (224–239 (CDAVVVGSGSGGGVAA)) interacts with FAD. The active-site Proton acceptor is the H659.

This sequence belongs to the GMC oxidoreductase family.

The protein resides in the membrane. It catalyses the reaction a long-chain primary fatty alcohol + O2 = a long-chain fatty aldehyde + H2O2. Long-chain fatty alcohol oxidase involved in the omega-oxidation pathway of lipid degradation. This Arabidopsis thaliana (Mouse-ear cress) protein is Long-chain-alcohol oxidase FAO4A (FAO4A).